Here is a 413-residue protein sequence, read N- to C-terminus: GPRSLVLLENLNLRDTHSLFFRSLADRGFELTFRTADDAGLSLIKYGEFLYDNLIIFSPSIEDFGGNINVETITAFIDGGGSVLVAASSDIGDPLRELGSECGIEFDEERTAVIDHHNYDISDPGQHTLIVADAENLLKAPTIVGKKALNPILFRGVGMVADPDNPLVLDILTGSSTSYSFFPDKPITQYPHAVGKNTLLIAGLQARNNARVVFSGSLDFFSDAFFSSAVQKAAPGSKRYSQTGNYELAVALSRWVFKEEGVLRVGAVSHHRVGELAPPNAYTVTDLVEYSIVIEKLSDGKWIPFDGDDIQLEFVRIDPFVRTFLKRNGGKYSVQFKLPDVYGVFQFKVDYNRLGYTHLYSSTQVSVRPLQHTQYERFIPSAYPYYAGAFSMMVGLFMFSIVFLHMKEKEKSD.

Residues 1–383 lie on the Lumenal side of the membrane; it reads GPRSLVLLEN…QYERFIPSAY (383 aa). The chain crosses the membrane as a helical span at residues 384–404; that stretch reads PYYAGAFSMMVGLFMFSIVFL. The Cytoplasmic segment spans residues 405-413; the sequence is HMKEKEKSD.

This sequence belongs to the DDOST 48 kDa subunit family. Component of the oligosaccharyltransferase (OST) complex.

Its subcellular location is the endoplasmic reticulum. It localises to the endoplasmic reticulum membrane. It participates in protein modification; protein glycosylation. In terms of biological role, subunit of the oligosaccharyl transferase (OST) complex that catalyzes the initial transfer of a defined glycan (Glc(3)Man(9)GlcNAc(2) in eukaryotes) from the lipid carrier dolichol-pyrophosphate to an asparagine residue within an Asn-X-Ser/Thr consensus motif in nascent polypeptide chains, the first step in protein N-glycosylation. N-glycosylation occurs cotranslationally and the complex associates with the Sec61 complex at the channel-forming translocon complex that mediates protein translocation across the endoplasmic reticulum (ER). All subunits are required for a maximal enzyme activity. Required for the assembly of both SST3A- and SS3B-containing OST complexes. This is Dolichyl-diphosphooligosaccharide--protein glycosyltransferase 48 kDa subunit from Gallus gallus (Chicken).